A 224-amino-acid polypeptide reads, in one-letter code: 7-cyano-7-deazaguanine synthase (224 aa).

10-20 (LSGGLDSATVV) is a binding site for ATP. 4 residues coordinate Zn(2+): Cys-189, Cys-199, Cys-202, and Cys-205.

This sequence belongs to the QueC family. Requires Zn(2+) as cofactor.

It catalyses the reaction 7-carboxy-7-deazaguanine + NH4(+) + ATP = 7-cyano-7-deazaguanine + ADP + phosphate + H2O + H(+). The protein operates within purine metabolism; 7-cyano-7-deazaguanine biosynthesis. Its function is as follows. Catalyzes the ATP-dependent conversion of 7-carboxy-7-deazaguanine (CDG) to 7-cyano-7-deazaguanine (preQ(0)). The polypeptide is 7-cyano-7-deazaguanine synthase (Pseudomonas aeruginosa (strain LESB58)).